The chain runs to 101 residues: Protein S100-A3 (101 aa).

At A2 the chain carries N-acetylalanine. EF-hand domains are found at residues 12–47 (IVCT…TWTP) and 50–85 (FREC…LCLY). 2 residues coordinate Ca(2+): K28 and E33. The cysteines at positions 30 and 68 are disulfide-linked. Citrulline; by PAD3 is present on R51. The Ca(2+) site is built by D63, N65, D67, E69, and E74. Cysteines 81 and 99 form a disulfide. Residues C83, C86, H87, and C93 each contribute to the Zn(2+) site.

Belongs to the S-100 family. In terms of assembly, homodimer and homotetramer for the citrullinated form. More than half of the arginine residues undergo citrullination by PAD1 and PAD2. Arg-51 is specifically citrullinated by PAD3 and promotes tetramerization. Skin specific, specifically expressed at the inner endocuticle of hair fibers.

The protein localises to the cytoplasm. Its function is as follows. Binds both calcium and zinc. May be involved in calcium-dependent cuticle cell differentiation, hair shaft and hair cuticular barrier formation. This Homo sapiens (Human) protein is Protein S100-A3 (S100A3).